The following is a 65-amino-acid chain: Large ribosomal subunit protein bL35 (65 aa).

The tract at residues 1-52 is disordered; that stretch reads MPKIKTNRGAAKRFKRTGSGGFKCVQSHRRHILTKKSTKRKRQLRSPDMVHP. Over residues 26–44 the composition is skewed to basic residues; that stretch reads QSHRRHILTKKSTKRKRQL.

The protein belongs to the bacterial ribosomal protein bL35 family.

The protein is Large ribosomal subunit protein bL35 of Methylococcus capsulatus (strain ATCC 33009 / NCIMB 11132 / Bath).